A 310-amino-acid chain; its full sequence is Deoxyribonuclease gamma (310 aa).

Residues methionine 1–alanine 25 form the signal peptide. Positions lysine 40–arginine 56 match the Bipartite nuclear localization signal motif. Catalysis depends on residues glutamate 105 and histidine 160. The cysteines at positions 199 and 236 are disulfide-linked. The interval serine 289–serine 310 is not required for free DNA-nuclease activity but required for activity towards liposome-coated DNA. The short motif at leucine 301–glycine 307 is the Nuclear localization signal element.

Belongs to the DNase I family. It depends on Ca(2+) as a cofactor. Mg(2+) is required as a cofactor. Poly-ADP-ribosylated by PARP1. ADP-ribosylation negatively regulates enzymatic activity during apoptosis. Expressed at high levels in liver, spleen and testes. Expressed at lower levels in heart, lungs, skeletal muscle and kidney. Not expressed in brain. Predominantly expressed in macrophages; at protein level. Secreted by mononuclear phagocytes.

It localises to the nucleus. It is found in the endoplasmic reticulum. The protein resides in the secreted. Inhibited by zinc. Inhibited by heparin and proteolysis by plasmin. Its function is as follows. Has DNA hydrolytic activity. Is capable of both single- and double-stranded DNA cleavage, producing DNA fragments with 3'-OH ends. Can cleave chromatin to nucleosomal units and cleaves nucleosomal and liposome-coated DNA. Acts in internucleosomal DNA fragmentation (INDF) during apoptosis and necrosis. The role in apoptosis includes myogenic and neuronal differentiation, and BCR-mediated clonal deletion of self-reactive B cells. Is active on chromatin in apoptotic cell-derived membrane-coated microparticles and thus suppresses anti-DNA autoimmunity. Together with DNASE1, plays a key role in degrading neutrophil extracellular traps (NETs). NETs are mainly composed of DNA fibers and are released by neutrophils to bind pathogens during inflammation. Degradation of intravascular NETs by DNASE1 and DNASE1L3 is required to prevent formation of clots that obstruct blood vessels and cause organ damage following inflammation. This chain is Deoxyribonuclease gamma, found in Mus musculus (Mouse).